A 40-amino-acid polypeptide reads, in one-letter code: Photosystem II reaction center protein J (40 aa).

Residues 8-28 (IPLWLIGTVAGIAVIGLVGVF) traverse the membrane as a helical segment.

Belongs to the PsbJ family. As to quaternary structure, PSII is composed of 1 copy each of membrane proteins PsbA, PsbB, PsbC, PsbD, PsbE, PsbF, PsbH, PsbI, PsbJ, PsbK, PsbL, PsbM, PsbT, PsbX, PsbY, PsbZ, Psb30/Ycf12, at least 3 peripheral proteins of the oxygen-evolving complex and a large number of cofactors. It forms dimeric complexes.

The protein resides in the plastid. It localises to the chloroplast thylakoid membrane. Its function is as follows. One of the components of the core complex of photosystem II (PSII). PSII is a light-driven water:plastoquinone oxidoreductase that uses light energy to abstract electrons from H(2)O, generating O(2) and a proton gradient subsequently used for ATP formation. It consists of a core antenna complex that captures photons, and an electron transfer chain that converts photonic excitation into a charge separation. The sequence is that of Photosystem II reaction center protein J from Secale cereale (Rye).